Reading from the N-terminus, the 562-residue chain is NAD-dependent malic enzyme (562 aa).

The active-site Proton donor is the Y101. R154 contacts NAD(+). K172 (proton acceptor) is an active-site residue. 3 residues coordinate a divalent metal cation: E243, D244, and D267. NAD(+) is bound by residues D267 and N415.

Belongs to the malic enzymes family. In terms of assembly, homotetramer. Mg(2+) serves as cofactor. Requires Mn(2+) as cofactor.

The enzyme catalyses (S)-malate + NAD(+) = pyruvate + CO2 + NADH. The catalysed reaction is oxaloacetate + H(+) = pyruvate + CO2. This chain is NAD-dependent malic enzyme, found in Shewanella sp. (strain MR-4).